The sequence spans 241 residues: uncharacterized protein (241 aa).

A run of 5 helical transmembrane segments spans residues 7 to 27 (LIFL…WSVF), 37 to 57 (LFLL…LLLI), 72 to 92 (IIAL…SGFG), 110 to 130 (INLV…YVAF), and 138 to 158 (FGTL…IKII).

It is found in the cell membrane. This is an uncharacterized protein from Methanocaldococcus jannaschii (strain ATCC 43067 / DSM 2661 / JAL-1 / JCM 10045 / NBRC 100440) (Methanococcus jannaschii).